Here is a 227-residue protein sequence, read N- to C-terminus: Uracil-DNA glycosylase (227 aa).

The Proton acceptor role is filled by D68.

The protein belongs to the uracil-DNA glycosylase (UDG) superfamily. UNG family.

It localises to the cytoplasm. The catalysed reaction is Hydrolyzes single-stranded DNA or mismatched double-stranded DNA and polynucleotides, releasing free uracil.. Excises uracil residues from the DNA which can arise as a result of misincorporation of dUMP residues by DNA polymerase or due to deamination of cytosine. The protein is Uracil-DNA glycosylase of Mycobacterium avium (strain 104).